Here is a 306-residue protein sequence, read N- to C-terminus: D-alanine--D-alanine ligase (306 aa).

In terms of domain architecture, ATP-grasp spans 101 to 303 (KQVWQAVGLP…FSQLVVKILE (203 aa)). 134–189 (FTHLGLPLIVKPSREGSSVGMSKVNTLSDLPAALEEAFRHDDDVLVEKWLSGPEYT) contributes to the ATP binding site. Mg(2+) contacts are provided by Asp-257, Glu-270, and Asn-272.

It belongs to the D-alanine--D-alanine ligase family. The cofactor is Mg(2+). It depends on Mn(2+) as a cofactor.

It localises to the cytoplasm. The enzyme catalyses 2 D-alanine + ATP = D-alanyl-D-alanine + ADP + phosphate + H(+). The protein operates within cell wall biogenesis; peptidoglycan biosynthesis. Its function is as follows. Cell wall formation. This Pectobacterium atrosepticum (strain SCRI 1043 / ATCC BAA-672) (Erwinia carotovora subsp. atroseptica) protein is D-alanine--D-alanine ligase.